A 493-amino-acid chain; its full sequence is Cholesteryl ester transfer protein (493 aa).

The N-terminal stretch at 1–17 (MLAATVLTLALLGNAHA) is a signal peptide. Asn-105 carries an N-linked (GlcNAc...) (complex) asparagine glycan. A disulfide bridge connects residues Cys-160 and Cys-201. Residues Asn-257, Asn-358, and Asn-413 are each glycosylated (N-linked (GlcNAc...) asparagine).

Belongs to the BPI/LBP/Plunc superfamily. BPI/LBP family. As to expression, expressed by the liver and secreted in plasma.

The protein resides in the secreted. It carries out the reaction cholesteryl (9Z-octadecenoate)(in) = cholesteryl (9Z-octadecenoate)(out). The enzyme catalyses 1,2,3-tri-(9Z-octadecenoyl)-glycerol(in) = 1,2,3-tri-(9Z-octadecenoyl)-glycerol(out). It catalyses the reaction cholesteryl (9Z,12Z)-octadecadienoate(in) = cholesteryl (9Z,12Z)-octadecadienoate(out). In terms of biological role, involved in the transfer of neutral lipids, including cholesteryl ester and triglyceride, among lipoprotein particles. Allows the net movement of cholesteryl ester from high density lipoproteins/HDL to triglyceride-rich very low density lipoproteins/VLDL, and the equimolar transport of triglyceride from VLDL to HDL. Regulates the reverse cholesterol transport, by which excess cholesterol is removed from peripheral tissues and returned to the liver for elimination. This is Cholesteryl ester transfer protein from Homo sapiens (Human).